A 403-amino-acid polypeptide reads, in one-letter code: Chaperone protein DnaJ (403 aa).

The 66-residue stretch at 4-69 (DYYEILGVAR…DKRRRYDQFG (66 aa)) folds into the J domain. The segment at 159-240 (GVEKTIKIKK…CYGEGIKQGE (82 aa)) adopts a CR-type zinc-finger fold. Residues cysteine 172, cysteine 175, cysteine 188, cysteine 191, cysteine 214, cysteine 217, cysteine 228, and cysteine 231 each contribute to the Zn(2+) site. 4 CXXCXGXG motif repeats span residues 172-179 (CRECNGTG), 188-195 (CPTCHGSG), 214-221 (CPTCGGEG), and 228-235 (CPSCYGEG).

This sequence belongs to the DnaJ family. In terms of assembly, homodimer. The cofactor is Zn(2+).

It is found in the cytoplasm. In terms of biological role, participates actively in the response to hyperosmotic and heat shock by preventing the aggregation of stress-denatured proteins and by disaggregating proteins, also in an autonomous, DnaK-independent fashion. Unfolded proteins bind initially to DnaJ; upon interaction with the DnaJ-bound protein, DnaK hydrolyzes its bound ATP, resulting in the formation of a stable complex. GrpE releases ADP from DnaK; ATP binding to DnaK triggers the release of the substrate protein, thus completing the reaction cycle. Several rounds of ATP-dependent interactions between DnaJ, DnaK and GrpE are required for fully efficient folding. Also involved, together with DnaK and GrpE, in the DNA replication of plasmids through activation of initiation proteins. The protein is Chaperone protein DnaJ of Chlorobaculum tepidum (strain ATCC 49652 / DSM 12025 / NBRC 103806 / TLS) (Chlorobium tepidum).